The sequence spans 427 residues: Glutamate-1-semialdehyde 2,1-aminomutase (427 aa).

At lysine 265 the chain carries N6-(pyridoxal phosphate)lysine.

The protein belongs to the class-III pyridoxal-phosphate-dependent aminotransferase family. HemL subfamily. In terms of assembly, homodimer. It depends on pyridoxal 5'-phosphate as a cofactor.

The protein resides in the cytoplasm. It catalyses the reaction (S)-4-amino-5-oxopentanoate = 5-aminolevulinate. It participates in porphyrin-containing compound metabolism; protoporphyrin-IX biosynthesis; 5-aminolevulinate from L-glutamyl-tRNA(Glu): step 2/2. This chain is Glutamate-1-semialdehyde 2,1-aminomutase, found in Burkholderia cenocepacia (strain HI2424).